A 185-amino-acid polypeptide reads, in one-letter code: MSKNKGFSETSAGRYSLALYELAVEANNLNEIEVHSASIINLITSSEDFKSLIKDPTNNKEDQLNALSKISEQYKLNELLTKFLSFLISKRRFFYVDKILKSFVETCSVKRGELKAELTSAKDLTENEINNIKEELTKNFSSKIKLNYKHDASLIGGLIVQVGSTMVDTSIKNKLQQIENRMIEA.

It belongs to the ATPase delta chain family. In terms of assembly, F-type ATPases have 2 components, F(1) - the catalytic core - and F(0) - the membrane proton channel. F(1) has five subunits: alpha(3), beta(3), gamma(1), delta(1), epsilon(1). F(0) has three main subunits: a(1), b(2) and c(10-14). The alpha and beta chains form an alternating ring which encloses part of the gamma chain. F(1) is attached to F(0) by a central stalk formed by the gamma and epsilon chains, while a peripheral stalk is formed by the delta and b chains.

The protein localises to the cell inner membrane. Its function is as follows. F(1)F(0) ATP synthase produces ATP from ADP in the presence of a proton or sodium gradient. F-type ATPases consist of two structural domains, F(1) containing the extramembraneous catalytic core and F(0) containing the membrane proton channel, linked together by a central stalk and a peripheral stalk. During catalysis, ATP synthesis in the catalytic domain of F(1) is coupled via a rotary mechanism of the central stalk subunits to proton translocation. Functionally, this protein is part of the stalk that links CF(0) to CF(1). It either transmits conformational changes from CF(0) to CF(1) or is implicated in proton conduction. The chain is ATP synthase subunit delta from Pelagibacter ubique (strain HTCC1062).